A 572-amino-acid chain; its full sequence is Proline--tRNA ligase (572 aa).

The protein belongs to the class-II aminoacyl-tRNA synthetase family. ProS type 1 subfamily. In terms of assembly, homodimer.

Its subcellular location is the cytoplasm. It catalyses the reaction tRNA(Pro) + L-proline + ATP = L-prolyl-tRNA(Pro) + AMP + diphosphate. In terms of biological role, catalyzes the attachment of proline to tRNA(Pro) in a two-step reaction: proline is first activated by ATP to form Pro-AMP and then transferred to the acceptor end of tRNA(Pro). As ProRS can inadvertently accommodate and process non-cognate amino acids such as alanine and cysteine, to avoid such errors it has two additional distinct editing activities against alanine. One activity is designated as 'pretransfer' editing and involves the tRNA(Pro)-independent hydrolysis of activated Ala-AMP. The other activity is designated 'posttransfer' editing and involves deacylation of mischarged Ala-tRNA(Pro). The misacylated Cys-tRNA(Pro) is not edited by ProRS. The polypeptide is Proline--tRNA ligase (Klebsiella pneumoniae (strain 342)).